Reading from the N-terminus, the 530-residue chain is [Pyruvate dehydrogenase [acetyl-transferring]]-phosphatase 2, mitochondrial (530 aa).

The transit peptide at 1–67 directs the protein to the mitochondrion; the sequence is MSSTASYRIF…FALRKAYRHT (67 aa). Residues 107–518 form the PPM-type phosphatase domain; that stretch reads VLRFESNQLA…DDITVMVVFF (412 aa). Mn(2+) is bound by residues aspartate 142, glycine 143, aspartate 413, and aspartate 509.

The protein belongs to the PP2C family. The cofactor is Mg(2+). Highly expressed in liver.

The protein resides in the mitochondrion. The catalysed reaction is O-phospho-L-seryl-[pyruvate dehydrogenase E1 alpha subunit] + H2O = L-seryl-[pyruvate dehydrogenase E1 alpha subunit] + phosphate. With respect to regulation, mg(2+)-dependent protein phosphatase. Phosphatase activity is increased in the presence of spermine, a naturally produced polyamine. In terms of biological role, mitochondrial enzyme that catalyzes the dephosphorylation and concomitant reactivation of the alpha subunit of the E1 component of the pyruvate dehydrogenase complex (PDC), thereby stimulating the conversion of pyruvate into acetyl-CoA. Acts as a crucial regulator of T cell metabolism and function, with a particular focus on T-helper Th17. This chain is [Pyruvate dehydrogenase [acetyl-transferring]]-phosphatase 2, mitochondrial (Pdp2), found in Rattus norvegicus (Rat).